We begin with the raw amino-acid sequence, 256 residues long: Bialaphos biosynthetic pathway regulatory protein (256 aa).

The 66-residue stretch at 184–249 (ETADAIDVSD…QLGARAAECR (66 aa)) folds into the HTH luxR-type domain. The segment at residues 208–227 (DVAMARSLGISTRTLRRVIT) is a DNA-binding region (H-T-H motif).

Its function is as follows. Involved in the regulation of the biosynthesis of phosphinothricin tripeptide (PTT), also known as bialaphos (BA), a natural-product antibiotic and potent herbicide. This is Bialaphos biosynthetic pathway regulatory protein (brpA) from Streptomyces hygroscopicus.